The chain runs to 140 residues: Lipoprotein MlpG (140 aa).

The first 17 residues, 1 to 17, serve as a signal peptide directing secretion; it reads MKIINILFCLFLLMLNG. Cys18 carries N-palmitoyl cysteine lipidation. Residue Cys18 is the site of S-diacylglycerol cysteine attachment. Positions 22-57 are disordered; sequence DTNTKQTKSRQKRDLTQKEATQEKPKSKSKEDLLRE. The span at 33–57 shows a compositional bias: basic and acidic residues; the sequence is KRDLTQKEATQEKPKSKSKEDLLRE.

It belongs to the Multicopy lipoprotein (Mlp) family.

It is found in the cell outer membrane. Functionally, an outer membrane protein that may participate in pathogenesis. Some human Lyme disease patients have antibodies against this protein. The Mlp proteins probably undergo intragenic recombination, generating new alleles. The sequence is that of Lipoprotein MlpG from Borreliella burgdorferi (strain ATCC 35210 / DSM 4680 / CIP 102532 / B31) (Borrelia burgdorferi).